The chain runs to 209 residues: uncharacterized protein (209 aa).

The N-terminal stretch at 1-17 (MKKLVTGLLALSLFLAA) is a signal peptide. Residues 17–106 (ACGQDSDQQK…SGQTTNNQKS (90 aa)) form a disordered region. A lipid anchor (N-palmitoyl cysteine) is attached at C18. C18 carries S-diacylglycerol cysteine lipidation. The segment covering 23 to 70 (DQQKDSNKEKDDKAKTEQQDKKTNDSSKDKKDNKDDSKDVNKDNKDNS) has biased composition (basic and acidic residues). Positions 71 to 106 (ANDNQQQSNSNATNNDQNQTNNNQSNSGQTTNNQKS) are enriched in low complexity.

It localises to the cell membrane. This is an uncharacterized protein from Staphylococcus aureus (strain MRSA252).